The sequence spans 691 residues: T-box transcription factor TBX2-B (691 aa).

A DNA-binding region (T-box) is located at residues 104–277 (LWDQFHKIGT…HNPFAKGFRD (174 aa)). 2 disordered regions span residues 301–440 (CKAD…SLSK) and 612–691 (NLLT…ESPK). The span at 325-335 (HSPLSAAPSPL) shows a compositional bias: low complexity. Basic and acidic residues-rich tracts occupy residues 340 to 361 (TNRE…EVRS), 378 to 402 (RLED…RKDG), and 415 to 433 (SLEK…KSDP). Residues 624-639 (PGSESSKPGSSRESSP) are compositionally biased toward low complexity. Residues 659–684 (SMKDSINELQRIQRLVSGLERQREVS) adopt a coiled-coil conformation. The segment covering 678 to 691 (ERQREVSPGRESPK) has biased composition (basic and acidic residues).

As to quaternary structure, binds DNA as a monomer.

Its subcellular location is the nucleus. Transcription factor which acts as a transcriptional repressor. May also function as a transcriptional activator. Binds to the palindromic T site 5'-TTCACACCTAGGTGTGAA-3' DNA sequence, or a half-site, which are present in the regulatory region of several genes. The protein is T-box transcription factor TBX2-B (tbx2-b) of Xenopus laevis (African clawed frog).